We begin with the raw amino-acid sequence, 356 residues long: Homoserine O-acetyltransferase (356 aa).

In terms of domain architecture, AB hydrolase-1 spans asparagine 50–leucine 335. The Nucleophile role is filled by serine 146. Residue arginine 215 coordinates substrate. Catalysis depends on residues aspartate 302 and histidine 331. Aspartate 332 contacts substrate.

This sequence belongs to the AB hydrolase superfamily. MetX family. Homodimer.

The protein resides in the cytoplasm. It catalyses the reaction L-homoserine + acetyl-CoA = O-acetyl-L-homoserine + CoA. Its pathway is amino-acid biosynthesis; L-methionine biosynthesis via de novo pathway; O-acetyl-L-homoserine from L-homoserine: step 1/1. In terms of biological role, transfers an acetyl group from acetyl-CoA to L-homoserine, forming acetyl-L-homoserine. This chain is Homoserine O-acetyltransferase, found in Chlorobaculum parvum (strain DSM 263 / NCIMB 8327) (Chlorobium vibrioforme subsp. thiosulfatophilum).